The following is a 524-amino-acid chain: Translation initiation factor eIF2B subunit delta (524 aa).

Residues 1-155 (MAAVAVAVRE…EHTPADDPTL (155 aa)) form a disordered region. Ala2 is subject to N-acetylalanine. Basic and acidic residues-rich tracts occupy residues 8–20 (VREE…KTEL) and 31–40 (LTQEEKLQLR). Ser12 bears the Phosphoserine mark. A compositionally biased stretch (basic residues) spans 41–51 (KEKKQQKKKRK). The residue at position 86 (Thr86) is a Phosphothreonine. Over residues 96–121 (SKAELRAERRAKQEAERALKQARKGE) the composition is skewed to basic and acidic residues. Polar residues predominate over residues 130-140 (CPSTAGETTSG). The interval 171–180 (RKDYGSKVSL) is may bind the chemical integrated stress response (ISR) inhibitor ISRIB.

The protein belongs to the eIF-2B alpha/beta/delta subunits family. In terms of assembly, component of the translation initiation factor 2B (eIF2B) complex which is a heterodecamer of two sets of five different subunits: alpha, beta, gamma, delta and epsilon. Subunits alpha, beta and delta comprise a regulatory subcomplex and subunits epsilon and gamma comprise a catalytic subcomplex. Within the complex, the hexameric regulatory complex resides at the center, with the two heterodimeric catalytic subcomplexes bound on opposite sides.

The protein localises to the cytoplasm. Its subcellular location is the cytosol. With respect to regulation, activated by the chemical integrated stress response (ISR) inhibitor ISRIB which stimulates guanine nucleotide exchange factor activity for both phosphorylated and unphosphorylated eIF2. In terms of biological role, acts as a component of the translation initiation factor 2B (eIF2B) complex, which catalyzes the exchange of GDP for GTP on eukaryotic initiation factor 2 (eIF2) gamma subunit. Its guanine nucleotide exchange factor activity is repressed when bound to eIF2 complex phosphorylated on the alpha subunit, thereby limiting the amount of methionyl-initiator methionine tRNA available to the ribosome and consequently global translation is repressed. This chain is Translation initiation factor eIF2B subunit delta (Eif2b4), found in Mus musculus (Mouse).